We begin with the raw amino-acid sequence, 404 residues long: Cytoplasmic tRNA 2-thiolation protein 2 (404 aa).

The protein belongs to the CTU2/NCS2 family.

Its subcellular location is the cytoplasm. It participates in tRNA modification; 5-methoxycarbonylmethyl-2-thiouridine-tRNA biosynthesis. In terms of biological role, plays a central role in 2-thiolation of mcm(5)S(2)U at tRNA wobble positions of tRNA(Lys), tRNA(Glu) and tRNA(Gln). May act by forming a heterodimer with NCS6/CTU1 that ligates sulfur from thiocarboxylated URM1 onto the uridine of tRNAs at wobble position. This is Cytoplasmic tRNA 2-thiolation protein 2 from Drosophila yakuba (Fruit fly).